We begin with the raw amino-acid sequence, 589 residues long: TAF5-like RNA polymerase II p300/CBP-associated factor-associated factor 65 kDa subunit 5L (589 aa).

6 WD repeats span residues 266 to 305, 340 to 379, 382 to 421, 424 to 463, 466 to 505, and 508 to 547; these read NTEQ…LKSE, GHCG…NTVL, GHAY…PLRI, GHLA…SVRL, GHRG…LFKE, and GHTD…CNTP.

Belongs to the WD repeat TAF5 family. In terms of assembly, the PCAF complex is composed of a number of TBP-associated factors (TAFS), such as TAF5, TAF5L, TAF6, TAF6L, TAF9, TAF10 and TAF12, PCAF, and also PCAF-associated factors (PAFs), such as TADA2L/ADA2, TADA3L/ADA3 and SPT3. Component of the STAGA transcription coactivator-HAT complex, at least composed of SUPT3H, GCN5L2, TAF5L, TAF6L, SUPT7L, TADA3L, TAD1L, TAF10, TAF12, TRRAP and TAF9.

It localises to the nucleus. In terms of biological role, functions as a component of the PCAF complex. The PCAF complex is capable of efficiently acetylating histones in a nucleosomal context. The PCAF complex could be considered as the human version of the yeast SAGA complex. With TAF6L, acts as an epigenetic regulator essential for somatic reprogramming. Regulates target genes through H3K9ac deposition and MYC recruitment which trigger MYC regulatory network to orchestrate gene expression programs to control embryonic stem cell state. The chain is TAF5-like RNA polymerase II p300/CBP-associated factor-associated factor 65 kDa subunit 5L from Mus musculus (Mouse).